A 120-amino-acid polypeptide reads, in one-letter code: Small ribosomal subunit protein eS24 (120 aa).

Residues 101–120 form a disordered region; it reads RDAGTKQKKGGSKGGQGAKG.

Belongs to the eukaryotic ribosomal protein eS24 family.

The sequence is that of Small ribosomal subunit protein eS24 from Saccharolobus islandicus (strain Y.N.15.51 / Yellowstone #2) (Sulfolobus islandicus).